We begin with the raw amino-acid sequence, 514 residues long: Na(+)/H(+) antiporter NhaB (514 aa).

11 helical membrane-spanning segments follow: residues 13–33 (FMGNSPDWYKLAIITFLIINP), 34–54 (LIFFFVDPFIAGWLLVVEFIF), 96–116 (VILLLVFMVAGIYFMKQLLLF), 136–156 (CFASAFLSAFLDALTVIAVVI), 203–223 (LMMHAGVGTALGGVMTMVGEP), 236–256 (FVTFFIRMSPVTIPVFFAGLA), 304–324 (ALIGIWLIVALALHLAEVGII), 349–369 (EEALPFTALLTVFFSVVAVII), 392–412 (LFYLFNGLLSAISDNVFVGTV), 448–468 (ATPNGQAAFLFLLTSALSPLI), and 479–499 (ALPYTIVMTLLGLLAVEFWLV).

This sequence belongs to the NhaB Na(+)/H(+) (TC 2.A.34) antiporter family.

It localises to the cell inner membrane. The enzyme catalyses 2 Na(+)(in) + 3 H(+)(out) = 2 Na(+)(out) + 3 H(+)(in). Na(+)/H(+) antiporter that extrudes sodium in exchange for external protons. This Proteus mirabilis (strain HI4320) protein is Na(+)/H(+) antiporter NhaB.